The chain runs to 59 residues: Bdellastasin (59 aa).

Cystine bridges form between cysteine 10-cysteine 21, cysteine 15-cysteine 26, cysteine 28-cysteine 48, cysteine 33-cysteine 52, and cysteine 37-cysteine 54. Residues 28–54 (CSDLHCKVKCEHGFKKDDNGCEYACIC) form the Antistasin-like domain.

It is found in the secreted. In terms of biological role, strong inhibitor of mammalian trypsin, plasmin and acrosin. The polypeptide is Bdellastasin (Hirudo medicinalis (Medicinal leech)).